The sequence spans 101 residues: Small ribosomal subunit protein uS10 (101 aa).

This sequence belongs to the universal ribosomal protein uS10 family. Part of the 30S ribosomal subunit.

Involved in the binding of tRNA to the ribosomes. In Brachyspira hyodysenteriae (Treponema hyodysenteriae), this protein is Small ribosomal subunit protein uS10.